The primary structure comprises 306 residues: Triplex capsid protein 2 (306 aa).

The protein belongs to the herpesviridae TRX2 protein family. As to quaternary structure, interacts with TRX1 and major capisd protein/MCP.

It localises to the virion. The protein resides in the host nucleus. In terms of biological role, structural component of the T=16 icosahedral capsid. The capsid is composed of pentamers and hexamers of major capsid protein/MCP, which are linked together by heterotrimers called triplexes. These triplexes are formed by a single molecule of triplex protein 1/TRX1 and two copies of triplex protein 2/TRX2. Additionally, TRX1 is required for efficient transport of TRX2 to the nucleus, which is the site of capsid assembly. The sequence is that of Triplex capsid protein 2 from Human cytomegalovirus (strain AD169) (HHV-5).